We begin with the raw amino-acid sequence, 562 residues long: DNA-binding protein MutS2 (562 aa).

380–387 (GANSGGKT) contacts ATP.

This sequence belongs to the DNA mismatch repair MutS family. Archaeal Muts2 subfamily. In terms of assembly, multimer. Co(2+) is required as a cofactor. Requires Mn(2+) as cofactor.

In terms of biological role, has ATPase and non-specific DNA-binding activities. May be involved in recombination and/or recombinational repair. Not involved in mismatch repair. This chain is DNA-binding protein MutS2, found in Pyrococcus furiosus (strain ATCC 43587 / DSM 3638 / JCM 8422 / Vc1).